Here is a 496-residue protein sequence, read N- to C-terminus: Trimethylamine methyltransferase MttB (496 aa).

A non-standard amino acid (pyrrolysine) is located at residue Pyl-331.

It belongs to the trimethylamine methyltransferase family.

The enzyme catalyses Co(I)-[trimethylamine-specific corrinoid protein] + trimethylamine + H(+) = methyl-Co(III)-[trimethylamine-specific corrinoid protein] + dimethylamine. In terms of biological role, catalyzes the transfer of a methyl group from trimethylamine to the corrinoid cofactor of MttC. In Desulfitobacterium hafniense (strain DSM 10664 / DCB-2), this protein is Trimethylamine methyltransferase MttB.